A 439-amino-acid polypeptide reads, in one-letter code: Probable threonine protease PRSS50 (439 aa).

Disordered regions lie at residues 1–22 and 48–130; these read MEPWCGAEVRGQGPQGPRVPGA and ERIR…TMAP. Residues 1–47 form the signal peptide; sequence MEPWCGAEVRGQGPQGPRVPGASRSRSRALLLLLLLLLLLLPRRPAG. The segment covering 9–21 has biased composition (low complexity); that stretch reads VRGQGPQGPRVPG. The Extracellular portion of the chain corresponds to 48–415; that stretch reads ERIRPRRPPR…WIWDRLSGEP (368 aa). The segment covering 51–61 has biased composition (basic residues); that stretch reads RPRRPPRHAHP. The span at 112–127 shows a compositional bias: low complexity; it reads QAQTNQTTTAPPNSQT. 2 N-linked (GlcNAc...) asparagine glycosylation sites follow: Asn116 and Asn187. Residues 157–412 enclose the Peptidase S1 domain; sequence FCGSSHEPDP…YRPWIWDRLS (256 aa). Cys192 and Cys208 are disulfide-bonded. His207 serves as the catalytic Charge relay system. Asn226 is a glycosylation site (N-linked (GlcNAc...) asparagine). Catalysis depends on Asp260, which acts as the Charge relay system. 3 disulfide bridges follow: Cys294–Cys370, Cys327–Cys350, and Cys360–Cys388. Residue Thr364 is the Charge relay system of the active site. The chain crosses the membrane as a helical span at residues 416 to 436; that stretch reads LALPAPSRTLLLAFLLLLILL. The Cytoplasmic segment spans residues 437-439; it reads GTL.

It belongs to the peptidase S1 family.

It is found in the membrane. Functionally, may be involved in proteolysis through its threonine endopeptidase activity. This is Probable threonine protease PRSS50 (Prss50) from Mus musculus (Mouse).